We begin with the raw amino-acid sequence, 405 residues long: Tryptophan synthase beta chain (405 aa).

At K95 the chain carries N6-(pyridoxal phosphate)lysine.

It belongs to the TrpB family. Tetramer of two alpha and two beta chains. Pyridoxal 5'-phosphate is required as a cofactor.

It catalyses the reaction (1S,2R)-1-C-(indol-3-yl)glycerol 3-phosphate + L-serine = D-glyceraldehyde 3-phosphate + L-tryptophan + H2O. It functions in the pathway amino-acid biosynthesis; L-tryptophan biosynthesis; L-tryptophan from chorismate: step 5/5. The beta subunit is responsible for the synthesis of L-tryptophan from indole and L-serine. In Pseudomonas putida (strain W619), this protein is Tryptophan synthase beta chain.